Here is a 327-residue protein sequence, read N- to C-terminus: Annexin A8 (327 aa).

4 Annexin repeats span residues 21–92 (FNPD…ALMY), 93–164 (PPYR…CLLQ), 177–249 (GLAL…TVVK), and 253–324 (NLHS…SLVG). Ca(2+)-binding residues include methionine 266, glycine 268, glycine 270, and aspartate 310.

This sequence belongs to the annexin family.

Its function is as follows. This protein is an anticoagulant protein that acts as an indirect inhibitor of the thromboplastin-specific complex, which is involved in the blood coagulation cascade. The protein is Annexin A8 of Homo sapiens (Human).